A 331-amino-acid chain; its full sequence is Type 2 lactosamine alpha-2,3-sialyltransferase (331 aa).

Over 1-4 (MRGY) the chain is Cytoplasmic. Residues 5–25 (LVAIFLSAVFLYYVLHCILWG) traverse the membrane as a helical; Signal-anchor for type II membrane protein segment. The Lumenal portion of the chain corresponds to 26–331 (TNVYWVAPVE…KNLVINLTQD (306 aa)). Residues Asn129, Asn181, Asn282, Asn295, Asn308, and Asn327 are each glycosylated (N-linked (GlcNAc...) asparagine).

Belongs to the glycosyltransferase 29 family. As to expression, ubiquitous.

The protein localises to the golgi apparatus membrane. The catalysed reaction is a neolactoside nLc4Cer(d18:1(4E)) + CMP-N-acetyl-beta-neuraminate = a neolactoside IV(3)-alpha-NeuAc-nLc4Cer(d18:1(4E)) + CMP + H(+). It catalyses the reaction a beta-D-galactosyl-(1-&gt;4)-N-acetyl-beta-D-glucosaminyl derivative + CMP-N-acetyl-beta-neuraminate = an N-acetyl-alpha-neuraminyl-(2-&gt;3)-beta-D-galactosyl-(1-&gt;4)-N-acetyl-beta-D-glucosaminyl derivative + CMP + H(+). The enzyme catalyses a neolactoside nLc6Cer(d18:1(4E)) + CMP-N-acetyl-beta-neuraminate = a neolactoside VI(3)-alpha-NeuNAc-nLc6Cer(d18:1(4E)) + CMP + H(+). Functionally, transfers the sialyl residue from CMP-N-acetyl-beta-neuraminate to the terminal galactose residue on sugar chains of glycoproteins and glycolipids. It's alpha-2,3-sialyltransferase activity is specific toward type II glycan chains (Galbeta1-4GlcNAc) on glycoproteins and glycolipids such as neolactosides nLc4Cer and nLc6Cer, whose sialyl-products serve as precursors for the Lewis X antigen. Critically involved in the synthesis of functional selectin ligands needed for neutrophil recruitment during inflammation and lymphocyte homing to the lymph nodes. This chain is Type 2 lactosamine alpha-2,3-sialyltransferase (ST3GAL6), found in Homo sapiens (Human).